The following is a 483-amino-acid chain: Zinc metalloproteinase/disintegrin (483 aa).

The N-terminal stretch at 1–20 (MIQVLLVTVCLAVFPYQGSS) is a signal peptide. A propeptide spanning residues 21-190 (IILESGNVND…KASQLYLTPE (170 aa)) is cleaved from the precursor. The Peptidase M12B domain occupies 197–395 (RYVKLAIVVD…YKPQCILNAP (199 aa)). Intrachain disulfides connect Cys-308/Cys-390, Cys-352/Cys-374, and Cys-354/Cys-357. His-333 serves as a coordination point for Zn(2+). Glu-334 is an active-site residue. Residues His-337 and His-343 each contribute to the Zn(2+) site. The propeptide occupies 396–411 (LRTDTVSTPVSGNELL). Residues 403 to 483 (TPVSGNELLE…SDDCPRWNDL (81 aa)) enclose the Disintegrin domain. Disulfide bonds link Cys-417-Cys-432, Cys-419-Cys-427, Cys-426-Cys-449, Cys-440-Cys-446, Cys-445-Cys-470, and Cys-458-Cys-477. The Cell attachment site signature appears at 462-464 (RGD).

This sequence belongs to the venom metalloproteinase (M12B) family. P-II subfamily. P-IIa sub-subfamily. In terms of assembly, monomer. Requires Zn(2+) as cofactor. In terms of tissue distribution, expressed by the venom gland.

It is found in the secreted. In terms of biological role, impairs hemostasis in the envenomed animal. Functionally, inhibits ADP- and collagen-induced human platelet aggregation with IC(50) of 123 and 135 nM, respectively. Inhibits sperm-egg binding in a concentration-dependent manner, but has no effect on the fusion of sperm-egg. This is Zinc metalloproteinase/disintegrin from Protobothrops jerdonii (Jerdon's pitviper).